A 404-amino-acid chain; its full sequence is 2,3-bisphosphoglycerate-independent phosphoglycerate mutase (404 aa).

Residues Leu-155–Arg-183 form a disordered region. Over residues Ser-162–Arg-183 the composition is skewed to basic and acidic residues.

It belongs to the BPG-independent phosphoglycerate mutase family. A-PGAM subfamily.

It catalyses the reaction (2R)-2-phosphoglycerate = (2R)-3-phosphoglycerate. It functions in the pathway carbohydrate degradation; glycolysis; pyruvate from D-glyceraldehyde 3-phosphate: step 3/5. In terms of biological role, catalyzes the interconversion of 2-phosphoglycerate and 3-phosphoglycerate. In Thermoplasma acidophilum (strain ATCC 25905 / DSM 1728 / JCM 9062 / NBRC 15155 / AMRC-C165), this protein is 2,3-bisphosphoglycerate-independent phosphoglycerate mutase.